We begin with the raw amino-acid sequence, 417 residues long: Probable diacetyl reductase [(R)-acetoin forming] 2 (417 aa).

Zn(2+) is bound at residue Cys-39. The residue at position 63 (Ser-63) is a Phosphoserine. Positions 64, 120, 123, 131, and 173 each coordinate Zn(2+). Residues 380 to 417 (GELNREADNEKKEISELSSRKDQERLRESINEAKLRHT) are disordered. Basic and acidic residues predominate over residues 381 to 417 (ELNREADNEKKEISELSSRKDQERLRESINEAKLRHT).

It belongs to the zinc-containing alcohol dehydrogenase family. Requires Zn(2+) as cofactor.

It localises to the cytoplasm. The protein localises to the nucleus. The enzyme catalyses (R)-acetoin + NAD(+) = diacetyl + NADH + H(+). Its function is as follows. Catalyzes the irreversible reduction of 2,3-butanediol to (S)-acetoin in the presence of NADH. The sequence is that of Probable diacetyl reductase [(R)-acetoin forming] 2 (BDH2) from Saccharomyces cerevisiae (strain ATCC 204508 / S288c) (Baker's yeast).